The primary structure comprises 395 residues: GPI-anchor transamidase (395 aa).

A signal peptide spans 1-27; the sequence is MAVTDSLSRAASTLAAVLLLSFGSVAA. The Lumenal segment spans residues 28 to 368; it reads SHIEDQAEQF…PKLKDWHPPG (341 aa). 4 residues coordinate Ca(2+): Asp79, Ile82, Glu118, and Asp120. Catalysis depends on His164, which acts as the Proton donor. Residue Cys206 is the Nucleophile; acyl-thioester intermediate of the active site. 3 residues coordinate a protein: Cys206, Ser232, and Ser234. Positions 231 to 236 are autoinhibitory loop; that stretch reads DSLSHQ. Cys275 and Cys280 are joined by a disulfide. Residues 369–385 form a helical membrane-spanning segment; it reads GFILGLWALIIMVFFKT. Topologically, residues 386-395 are cytoplasmic; it reads YGIKHMKFIF.

The protein belongs to the peptidase C13 family. As to quaternary structure, heteropentamer. Part of the GPI-anchor transamidase complex, consisting of PIGK, PIGT, PIGS, PIGU and GAA1. Interacts with GPAA1. Interacts with PIGT; this interaction, via a disulfide link, stabilizes the expression of GAA1 and PIGK and links them to PIGS. In terms of processing, the disulfide bond between PIGK/GPI8 and PIGT is important for normal enzyme activity.

The protein localises to the endoplasmic reticulum membrane. It participates in glycolipid biosynthesis; glycosylphosphatidylinositol-anchor biosynthesis. With respect to regulation, in the absence of proproteins substrates, exists in an inactive state with a disrupted catalytic site by an autoinhibitory loop. The binding of proprotein substrates, particularly the CSP region, to GPI-T triggers concerted conformational changes that alleviate the inhibition by the autoinhibitory loop. Meanwhile, proprotein residues near the omega- site induce the formation of a catalytic cleft for catalysis, following which the products are released and GPI-T reverts to the inactive state. In terms of biological role, catalytic subunit of the glycosylphosphatidylinositol-anchor (GPI-anchor) transamidase (GPI-T) complex that catalyzes the formation of the linkage between a proprotein and a GPI-anchor and participates in GPI anchored protein biosynthesis. Recognizes diverse proproteins at a C-terminal signal peptide (CSP) region that lacks consensus sequence and replaces it with a GPI-anchor via a transamidation reaction. Transamidation catalysis reaction follows a two-phase mechanism. In the acyl-enzyme phase, the carbonyl group of the proproteins's omega-site undergoes a nucleophilic attack forming an enzyme-substrate thioester bond. Followed by a general acid catalysis that allows CSP releasing, regenerating the carbonyl, and forming the acyl-enzyme intermediate. In the GPI-anchor attachment phase, the amino group of the GPI-anchor's ethanolamine phosphate, the one on third mannose (EtNP3), mediates a nucleophilic attack on the carbonyl of the acyl-enzyme intermediate, replacing the CSP, allowing GPI-anchor attachment to the omega-residue, therefore forming the product and freeing the enzyme. In Pongo abelii (Sumatran orangutan), this protein is GPI-anchor transamidase.